The sequence spans 1838 residues: Type III effector DspE (1838 aa).

Residues 1-12 (MELKSLGTEHKA) are compositionally biased toward basic and acidic residues. Disordered regions lie at residues 1-72 (MELK…AAHQ), 86-163 (KKFS…PTQQ), 182-264 (MAHP…VATP), 281-300 (LEGT…LKGS), 398-418 (DGKS…KTML), and 1480-1505 (NLAA…SNNR). Low complexity predominate over residues 27–46 (ALQQGSSSSSPQNAAASLAA). The segment covering 91 to 103 (SAPQGQPGTTHSK) has biased composition (polar residues). Residues 110–120 (LLARDDGETQH) show a composition bias toward basic and acidic residues. The span at 407–418 (GSGTQSHNKTML) shows a compositional bias: polar residues. Low complexity predominate over residues 1480 to 1502 (NLAAGSRERSTTSGQFGSTTSAS).

This sequence belongs to the AvrE family. As to quaternary structure, interacts with the chaperone DspF (DspB/F).

It is found in the secreted. The protein resides in the host cell. With respect to regulation, polyamidoamine dendrimers inhibit channel and virulence activities. Major virulence factor that may function as a water- and solute-permeable channel dedicated to creating osmotic/water potential perturbation and a water- and nutrient-rich apoplast in which bacteria multiply within the infected plant tissues. Expression in Xenopus oocytes results in inward and outward currents, permeability to water and osmolarity-dependent oocyte swelling and bursting. Functionally, acts as a major cell-death inducer during fire blight, a necrotic disease affecting plants of the rosaceous family, and during hypersensitive response (HR) on non-host plants. Essential for pathogenicity on host plants. Contributes quantitatively and in a strain-dependent fashion to HR elicitation in non-host plants such as tobacco. Induces cell death in leaves of apple, a host plant, and tobacco, a non-host plant. Also triggers necrosis in the widely used model, non-host, N.benthamiana and in yeast. Required for the transient multiplication and survival of E.amylovora in non-host A.thaliana leaves. In A.thaliana, triggers electrolyte leakage, activation of defense pathways, reactive oxygen species (ROS) accumulation and cell death. The toxicity of DspE in A.thaliana is associated with an early repression of de novo protein synthesis. This is Type III effector DspE from Erwinia amylovora (Fire blight bacteria).